The sequence spans 267 residues: tRNA pseudouridine synthase A (267 aa).

The Nucleophile role is filled by D51. A substrate-binding site is contributed by Y109.

It belongs to the tRNA pseudouridine synthase TruA family. As to quaternary structure, homodimer.

It catalyses the reaction uridine(38/39/40) in tRNA = pseudouridine(38/39/40) in tRNA. Its function is as follows. Formation of pseudouridine at positions 38, 39 and 40 in the anticodon stem and loop of transfer RNAs. In Staphylococcus aureus (strain Mu3 / ATCC 700698), this protein is tRNA pseudouridine synthase A.